The chain runs to 225 residues: Large ribosomal subunit protein bL25 (225 aa).

The disordered stretch occupies residues 188–225 (EEIEEAEAEAQATDADTATDDSEQTSEEQAEENKEDKE). Acidic residues predominate over residues 204–217 (TATDDSEQTSEEQA).

This sequence belongs to the bacterial ribosomal protein bL25 family. CTC subfamily. In terms of assembly, part of the 50S ribosomal subunit; part of the 5S rRNA/L5/L18/L25 subcomplex. Contacts the 5S rRNA. Binds to the 5S rRNA independently of L5 and L18.

Its function is as follows. This is one of the proteins that binds to the 5S RNA in the ribosome where it forms part of the central protuberance. In Exiguobacterium sibiricum (strain DSM 17290 / CCUG 55495 / CIP 109462 / JCM 13490 / 255-15), this protein is Large ribosomal subunit protein bL25.